Consider the following 320-residue polypeptide: Fructose-1,6-bisphosphatase class 1 (320 aa).

Mg(2+)-binding residues include Glu93, Asp114, Leu116, and Asp117. Substrate contacts are provided by residues 117–120, Tyr225, and Lys256; that span reads DGSS. Residue Glu262 participates in Mg(2+) binding.

Belongs to the FBPase class 1 family. In terms of assembly, homotetramer. It depends on Mg(2+) as a cofactor.

The protein localises to the cytoplasm. The enzyme catalyses beta-D-fructose 1,6-bisphosphate + H2O = beta-D-fructose 6-phosphate + phosphate. Its pathway is carbohydrate biosynthesis; gluconeogenesis. The polypeptide is Fructose-1,6-bisphosphatase class 1 (Syntrophotalea carbinolica (strain DSM 2380 / NBRC 103641 / GraBd1) (Pelobacter carbinolicus)).